The primary structure comprises 377 residues: Nitric oxide reductase FlRd-NAD(+) reductase (377 aa).

Belongs to the FAD-dependent oxidoreductase family. The cofactor is FAD.

The protein resides in the cytoplasm. It carries out the reaction 2 reduced [nitric oxide reductase rubredoxin domain] + NAD(+) + H(+) = 2 oxidized [nitric oxide reductase rubredoxin domain] + NADH. Its pathway is nitrogen metabolism; nitric oxide reduction. In terms of biological role, one of at least two accessory proteins for anaerobic nitric oxide (NO) reductase. Reduces the rubredoxin moiety of NO reductase. The polypeptide is Nitric oxide reductase FlRd-NAD(+) reductase (Shigella sonnei (strain Ss046)).